Consider the following 513-residue polypeptide: Acetylcholine receptor subunit delta (513 aa).

Residues M1 to C18 form the signal peptide. Residues V19–K244 lie on the Extracellular side of the membrane. N88 and N161 each carry an N-linked (GlcNAc...) asparagine glycan. A disulfide bridge connects residues C148 and C162. The next 3 membrane-spanning stretches (helical) occupy residues P245–L269, M277–S295, and Y311–F332. Over H333–R467 the chain is Cytoplasmic. Y388 carries the phosphotyrosine; by Tyr-kinases modification. The helical transmembrane segment at L468 to Y490 threads the bilayer.

It belongs to the ligand-gated ion channel (TC 1.A.9) family. Acetylcholine receptor (TC 1.A.9.1) subfamily. In terms of assembly, pentamer of two alpha chains, and one each of the beta, delta, and gamma chains.

The protein localises to the postsynaptic cell membrane. It is found in the cell membrane. The catalysed reaction is K(+)(in) = K(+)(out). The enzyme catalyses Na(+)(in) = Na(+)(out). After binding acetylcholine, the AChR responds by an extensive change in conformation that affects all subunits and leads to opening of an ion-conducting channel across the plasma membrane. The polypeptide is Acetylcholine receptor subunit delta (CHRND) (Gallus gallus (Chicken)).